The following is a 175-amino-acid chain: Peptide methionine sulfoxide reductase MsrA (175 aa).

The active site involves Cys10.

The protein belongs to the MsrA Met sulfoxide reductase family.

It catalyses the reaction L-methionyl-[protein] + [thioredoxin]-disulfide + H2O = L-methionyl-(S)-S-oxide-[protein] + [thioredoxin]-dithiol. The catalysed reaction is [thioredoxin]-disulfide + L-methionine + H2O = L-methionine (S)-S-oxide + [thioredoxin]-dithiol. Functionally, has an important function as a repair enzyme for proteins that have been inactivated by oxidation. Catalyzes the reversible oxidation-reduction of methionine sulfoxide in proteins to methionine. The polypeptide is Peptide methionine sulfoxide reductase MsrA (Psychrobacter sp. (strain PRwf-1)).